The primary structure comprises 896 residues: Desmocollin-3 (896 aa).

Residues 1 to 26 (MAAPGSGAPCAELCRQLLLTLVVFSF) form the signal peptide. Positions 27–134 (ACEACKKEIF…KETVLRRSKR (108 aa)) are excised as a propeptide. Cadherin domains are found at residues 135–242 (RWAP…HPIF), 243–354 (TEAV…LPTF), 355–471 (RQNA…GPEC), 472–579 (SPEV…EILQ), and 580–690 (DYLV…ILGK). Over 135–690 (RWAPIPCSMQ…RRSADVILGK (556 aa)) the chain is Extracellular. N-linked (GlcNAc...) asparagine glycosylation occurs at N165. 3 N-linked (GlcNAc...) asparagine glycosylation sites follow: N391, N546, and N629. The helical transmembrane segment at 691 to 711 (WAILAILLGIALLFSILLTLV) threads the bilayer. Residues 712 to 896 (CGIVSARNKK…AALAKTCTKR (185 aa)) lie on the Cytoplasmic side of the membrane.

In terms of assembly, may form homodimers. Interacts with DSG1; there is evidence to suggest that the interaction promotes cell-cell adhesion of keratinocytes. Expressed in stratified epithelia only, such as the epidermis, tongue, esophagus and rumen (at protein level).

The protein localises to the cell membrane. It localises to the cell junction. The protein resides in the desmosome. Its subcellular location is the cytoplasm. In terms of biological role, a component of desmosome cell-cell junctions which are required for positive regulation of cellular adhesion. Required for cell-cell adhesion in the epidermis, as a result required for the maintenance of the dermal cohesion and the dermal barrier function. Required for cell-cell adhesion of epithelial cell layers surrounding the telogen hair club, as a result plays an important role in telogen hair shaft anchorage. Essential for successful completion of embryo compaction and embryo development. The polypeptide is Desmocollin-3 (DSC3) (Bos taurus (Bovine)).